An 840-amino-acid polypeptide reads, in one-letter code: Heat shock 70 kDa protein 4 (840 aa).

K53 is modified (N6-acetyllysine). The residue at position 76 (S76) is a Phosphoserine. Y89 and Y336 each carry phosphotyrosine. S393 and S415 each carry phosphoserine. K430 is subject to N6-acetyllysine. A disordered region spans residues 500–575 (VHKSEESEEP…QAKKAKVKTS (76 aa)). The span at 514–533 (QNAKEEEKMQVDQEEPHTEE) shows a compositional bias: basic and acidic residues. Residue T538 is modified to Phosphothreonine. S546 carries the phosphoserine modification. The residue at position 660 (Y660) is a Phosphotyrosine. S756 bears the Phosphoserine mark. The residue at position 773 (K773) is an N6-methyllysine. The interval 781–840 (PIISKPKPKVEPPKEEPKHAEQNGPVDGQGDNPGTQAAEHGADTAVPSDGDKKLPEMDID) is disordered. Composition is skewed to basic and acidic residues over residues 788-801 (PKVE…KHAE) and 829-840 (DGDKKLPEMDID).

It belongs to the heat shock protein 70 family. In terms of assembly, interacts with TJP1/ZO-1. As to expression, ubiquitous. Highly expressed in testis.

The protein localises to the cytoplasm. This Rattus norvegicus (Rat) protein is Heat shock 70 kDa protein 4 (Hspa4).